A 201-amino-acid chain; its full sequence is MAEPGFLSLTLIGALVFGYFLGSIPFGLILTRLAGLGDVRSIGSGNIGATNVLRTGNKKLAAATLIFDMLKGTVAVLVASRYGPDAAIGAGFGAFIGHLFPVWIGFKGGKGVATYLGVLIGLAWPGALVFAAVWIVTALLTRYSSLAALIASIVVPIALYSRGYPAIAVLFAIMTVIVIFKHKANITRLLNGTESKIGAKG.

A run of 5 helical transmembrane segments spans residues Leu9–Ile29, Leu60–Ser80, Ala86–Phe106, Leu116–Val136, and Ile153–Ile173.

It belongs to the PlsY family. In terms of assembly, probably interacts with PlsX.

Its subcellular location is the cell inner membrane. It catalyses the reaction an acyl phosphate + sn-glycerol 3-phosphate = a 1-acyl-sn-glycero-3-phosphate + phosphate. Its pathway is lipid metabolism; phospholipid metabolism. In terms of biological role, catalyzes the transfer of an acyl group from acyl-phosphate (acyl-PO(4)) to glycerol-3-phosphate (G3P) to form lysophosphatidic acid (LPA). This enzyme utilizes acyl-phosphate as fatty acyl donor, but not acyl-CoA or acyl-ACP. This chain is Glycerol-3-phosphate acyltransferase, found in Brucella anthropi (strain ATCC 49188 / DSM 6882 / CCUG 24695 / JCM 21032 / LMG 3331 / NBRC 15819 / NCTC 12168 / Alc 37) (Ochrobactrum anthropi).